The sequence spans 398 residues: Acetate kinase 1 (398 aa).

Position 9 (Asn-9) interacts with Mg(2+). Lys-16 contacts ATP. A substrate-binding site is contributed by Arg-89. Asp-146 serves as the catalytic Proton donor/acceptor. Residues 206–210 (HLGNG), 281–283 (DCR), and 329–333 (GIGEN) contribute to the ATP site. Glu-384 serves as a coordination point for Mg(2+).

It belongs to the acetokinase family. As to quaternary structure, homodimer. Requires Mg(2+) as cofactor. It depends on Mn(2+) as a cofactor.

It is found in the cytoplasm. It catalyses the reaction acetate + ATP = acetyl phosphate + ADP. The protein operates within metabolic intermediate biosynthesis; acetyl-CoA biosynthesis; acetyl-CoA from acetate: step 1/2. Functionally, catalyzes the formation of acetyl phosphate from acetate and ATP. Can also catalyze the reverse reaction. In Photobacterium profundum (strain SS9), this protein is Acetate kinase 1.